Consider the following 440-residue polypeptide: uncharacterized protein (440 aa).

This is an uncharacterized protein from Rickettsia conorii (strain ATCC VR-613 / Malish 7).